Reading from the N-terminus, the 144-residue chain is Large ribosomal subunit protein uL15 (144 aa).

Positions Met1–Arg60 are disordered. A compositionally biased stretch (gly residues) spans Arg21 to Gly31.

The protein belongs to the universal ribosomal protein uL15 family. As to quaternary structure, part of the 50S ribosomal subunit.

Its function is as follows. Binds to the 23S rRNA. The protein is Large ribosomal subunit protein uL15 of Hahella chejuensis (strain KCTC 2396).